The sequence spans 387 residues: MSFPSDSVGLVTPQKFQFEEPLHLECGRVLPRFELMVETYGTLNADYSNAILICHALSGHHHAAGYHHDDDKKAGWWDACIGPGKAIDTNKFFVVALNNIGGCNGSTGPTSPNPENENRPYGPDFPLVTVRDWVKTQALLSDHLGIQSWYAVIGGSLGGMQALQWSVDYPDRLKNCVIIASAPKLSAQNIAFNEVARQSILSDPDFYHGRYLEHDSYPKRGLILARMVGHITYLSEEAMKQKFGRDLKSGKFMYGFDVEFQVESYLRYQGEQFSRNFDANTYLIMTKALDYFDPSREYEQSLTKAMAQTQCRFLVVSFTTDWRFAPERSQEIVDALITNHKPVTYLDVDAEQGHDSFLFPIPLYVKTLRAFLGGEAHLKSTPQVEIN.

In terms of domain architecture, AB hydrolase-1 spans 49 to 358 (NAILICHALS…DAEQGHDSFL (310 aa)). The active-site Nucleophile is the Ser156. Arg226 contributes to the substrate binding site. Active-site residues include Asp321 and His354. Asp355 contacts substrate.

The protein belongs to the AB hydrolase superfamily. MetX family. Homodimer.

Its subcellular location is the cytoplasm. It catalyses the reaction L-homoserine + succinyl-CoA = O-succinyl-L-homoserine + CoA. The protein operates within amino-acid biosynthesis; L-methionine biosynthesis via de novo pathway; O-succinyl-L-homoserine from L-homoserine: step 1/1. Its activity is regulated as follows. Requires MetW for activity. Transfers a succinyl group from succinyl-CoA to L-homoserine, forming succinyl-L-homoserine. The protein is Homoserine O-succinyltransferase of Acinetobacter baylyi (strain ATCC 33305 / BD413 / ADP1).